Reading from the N-terminus, the 125-residue chain is RxLR effector protein Avh6 (125 aa).

A signal peptide spans 1 to 25 (MRLSSTTFVVLAAVLLASGTAVSKA). A RxLR-dEER motif is present at residues 48-70 (RFLRSHHTEDGKAKLSNYDNEER).

It belongs to the RxLR effector family.

It localises to the secreted. The protein localises to the host cell. Its function is as follows. Effector that suppresses plant defense responses during the early stages of pathogen infection. Suppresses cell death induced by effectors and PAMPs in plant hosts. Triggers a hypersensitive response (HR) in the presence of Rps1d. Suppresses BAX-induced cell death and enhanced P.capsici infection in Nicotiana benthamiana. Also suppresses effector-triggered immunity induction by associating with Avr1b and Rps1b, suggesting a role in suppressing plant immunity. This Phytophthora sojae (Soybean stem and root rot agent) protein is RxLR effector protein Avh6.